A 190-amino-acid chain; its full sequence is uncharacterized protein (190 aa).

Positions 1 to 185 (MITMFKIVRG…LALETIGLGD (185 aa)) constitute a Macro domain.

This is an uncharacterized protein from Pyrococcus horikoshii (strain ATCC 700860 / DSM 12428 / JCM 9974 / NBRC 100139 / OT-3).